Here is a 190-residue protein sequence, read N- to C-terminus: Peptidyl-tRNA hydrolase (190 aa).

Y14 contacts tRNA. The Proton acceptor role is filled by H19. TRNA-binding residues include Y64, N66, and N112.

Belongs to the PTH family. As to quaternary structure, monomer.

It is found in the cytoplasm. It catalyses the reaction an N-acyl-L-alpha-aminoacyl-tRNA + H2O = an N-acyl-L-amino acid + a tRNA + H(+). Its function is as follows. Hydrolyzes ribosome-free peptidyl-tRNAs (with 1 or more amino acids incorporated), which drop off the ribosome during protein synthesis, or as a result of ribosome stalling. In terms of biological role, catalyzes the release of premature peptidyl moieties from peptidyl-tRNA molecules trapped in stalled 50S ribosomal subunits, and thus maintains levels of free tRNAs and 50S ribosomes. This chain is Peptidyl-tRNA hydrolase, found in Pelodictyon phaeoclathratiforme (strain DSM 5477 / BU-1).